The following is a 198-amino-acid chain: Holliday junction branch migration complex subunit RuvA (198 aa).

Residues M1–E61 are domain I. The interval G62–I140 is domain II. The segment at A141–S145 is flexible linker. The interval D146 to A198 is domain III.

Belongs to the RuvA family. In terms of assembly, homotetramer. Forms an RuvA(8)-RuvB(12)-Holliday junction (HJ) complex. HJ DNA is sandwiched between 2 RuvA tetramers; dsDNA enters through RuvA and exits via RuvB. An RuvB hexamer assembles on each DNA strand where it exits the tetramer. Each RuvB hexamer is contacted by two RuvA subunits (via domain III) on 2 adjacent RuvB subunits; this complex drives branch migration. In the full resolvosome a probable DNA-RuvA(4)-RuvB(12)-RuvC(2) complex forms which resolves the HJ.

The protein resides in the cytoplasm. In terms of biological role, the RuvA-RuvB-RuvC complex processes Holliday junction (HJ) DNA during genetic recombination and DNA repair, while the RuvA-RuvB complex plays an important role in the rescue of blocked DNA replication forks via replication fork reversal (RFR). RuvA specifically binds to HJ cruciform DNA, conferring on it an open structure. The RuvB hexamer acts as an ATP-dependent pump, pulling dsDNA into and through the RuvAB complex. HJ branch migration allows RuvC to scan DNA until it finds its consensus sequence, where it cleaves and resolves the cruciform DNA. This Lacticaseibacillus casei (strain BL23) (Lactobacillus casei) protein is Holliday junction branch migration complex subunit RuvA.